Reading from the N-terminus, the 254-residue chain is MHINYISVGNRLLPLSFQCAAGEKVYVAGPNGSGKSTLLSAIAGTLSSREGVKGEVLINETSLLTLPLAEQAIYRAYLCQQSRPAFNVDVFQMLALSLPVGRHVAEPEVQAAVRRVVELVQMQDKLHRSVQALSGGEWQRVRLAAVCLQVWRSLNPYSQLLILDEPAAPLDVAQAKWLYQLIDEMAAQGLVVIVANHDLNRVYQHADKVLLLNQGVLTAYGSADEVMSVENLQQVFETPVKKVAVDGQPYLIFT.

The region spanning 3–239 is the ABC transporter domain; sequence INYISVGNRL…ENLQQVFETP (237 aa). 29–36 contributes to the ATP binding site; sequence GPNGSGKS.

This sequence belongs to the ABC transporter superfamily. Vitamin B12 importer (TC 3.A.1.13.1) family. In terms of assembly, the complex is composed of two ATP-binding proteins (BtuD), two transmembrane proteins (BtuC) and a solute-binding protein (BtuF).

It is found in the cell inner membrane. The catalysed reaction is an R-cob(III)alamin(out) + ATP + H2O = an R-cob(III)alamin(in) + ADP + phosphate + H(+). Its function is as follows. Part of the ABC transporter complex BtuCDF involved in vitamin B12 import. Responsible for energy coupling to the transport system. This is Vitamin B12 import ATP-binding protein BtuD from Vibrio vulnificus (strain CMCP6).